A 486-amino-acid chain; its full sequence is Glutamate--tRNA ligase (486 aa).

A 'HIGH' region motif is present at residues proline 11–asparagine 21. The short motif at lysine 255 to arginine 259 is the 'KMSKS' region element. Position 258 (lysine 258) interacts with ATP.

Belongs to the class-I aminoacyl-tRNA synthetase family. Glutamate--tRNA ligase type 1 subfamily. Monomer.

Its subcellular location is the cytoplasm. It carries out the reaction tRNA(Glu) + L-glutamate + ATP = L-glutamyl-tRNA(Glu) + AMP + diphosphate. Functionally, catalyzes the attachment of glutamate to tRNA(Glu) in a two-step reaction: glutamate is first activated by ATP to form Glu-AMP and then transferred to the acceptor end of tRNA(Glu). This Streptococcus pneumoniae (strain Hungary19A-6) protein is Glutamate--tRNA ligase.